A 3630-amino-acid polypeptide reads, in one-letter code: Trimeric autotransporter adhesin AtaA (3630 aa).

The first 23 residues, Met1–Ala23, serve as a signal peptide directing secretion. The interval Lys24–Gly3487 is surface exposed passenger domain. Residues Ser108–Leu315 form an N-terminal YadA-like head region. The interval Asp316–Lys2904 is N-terminal stalk. Residues Ala2905–Leu3169 are C-terminal YadA-like head. The C-terminal stalk stretch occupies residues Lys3170–Ile3561. The segment at Leu3539–Pro3574 is outer membrane translocation of the passenger domain. Transmembrane regions (beta stranded) follow at residues Gly3575–Tyr3585, Glu3589–Thr3599, Thr3608–Ala3614, and Asp3618–Ile3629. The interval Gly3575–Asp3630 is translocator domain.

This sequence belongs to the autotransporter-2 (AT-2) (TC 1.B.40) family. Homotrimer. Interacts with TpgA.

The protein localises to the cell surface. The protein resides in the cell outer membrane. Functionally, responsible for autoagglutination, and for adhesion to abiotic and biotic surfaces such as polystyrene (PS), type I collagen, polypropylene (PP), polyvinylchloride (PVC), glass and stainless steel (SS). Adhesion is much stronger than that mediated by Yersinia YadA in a comparative assay. Confers autoagglutination and binding to PS, type I collagen, PP, PVC, glass and SS upon expression in Acinetobacter baylyi strain ADP1. Involved in rapid, irreversible adherence to polyurethane. Forms an unusual biofilm. An extended, surface exposed fiber binds to quartz crystals, PS and glass. It can be removed by washing in distilled water. This Acinetobacter sp. (strain Tol 5) protein is Trimeric autotransporter adhesin AtaA.